Reading from the N-terminus, the 779-residue chain is Putative helicase V13 (779 aa).

The SF3 helicase domain maps to 477 to 642 (DNPKPFITSL…FVKEEELNEK (166 aa)). 504-511 (GKSNAGKS) serves as a coordination point for ATP.

The chain is Putative helicase V13 from Acanthamoeba polyphaga (Amoeba).